We begin with the raw amino-acid sequence, 119 residues long: Ribonuclease P protein component (119 aa).

It belongs to the RnpA family. As to quaternary structure, consists of a catalytic RNA component (M1 or rnpB) and a protein subunit.

The catalysed reaction is Endonucleolytic cleavage of RNA, removing 5'-extranucleotides from tRNA precursor.. RNaseP catalyzes the removal of the 5'-leader sequence from pre-tRNA to produce the mature 5'-terminus. It can also cleave other RNA substrates such as 4.5S RNA. The protein component plays an auxiliary but essential role in vivo by binding to the 5'-leader sequence and broadening the substrate specificity of the ribozyme. This is Ribonuclease P protein component from Aeromonas salmonicida (strain A449).